We begin with the raw amino-acid sequence, 299 residues long: DNA-binding transcriptional activator HetR (299 aa).

The tract at residues 1–98 (MSNDIDLIKR…GKLLKTLGSQ (98 aa)) is DNA-binding domain. DNA contacts are provided by residues 34–40 (RHGAFLD) and 60–76 (NLRM…KRVK). A flap domain region spans residues 99–216 (EPRYLIQFPY…FYALTRPFYA (118 aa)). The active site involves Ser-152. 179–181 (SEA) lines the DNA pocket. Residues 217-299 (PADDQERTYI…LQMVFGRKED (83 aa)) are hood domain.

Belongs to the peptidase S48 family. As to quaternary structure, upon expression in E.coli most protein is monomeric, although varying amounts of homodimer can be seen. Homodimer; disulfide-linked. Homodimer. Binds the 6 residue C-terminal peptide of PatS; one peptide binds to each subunit. In bacterial two-hybrid assays interacts robustly with itself, Alr2902 and Alr3234 and more weakly with Als1930. Post-translationally, probably autodegrades.

With respect to regulation, protease activity is inhibited by PMSF, suggesting this is a serine protease. Its function is as follows. Controls heterocyst differentiation. Dimerization is required for DNA-binding. Has both a protease and a DNA-binding activity. In terms of biological role, controls heterocyst differentiation; increased expression leads to more heterocysts than usual. Has protease activity. Binds the promoter regions of hetR, hepA and patS and is required for their expression. Dimerization is required for DNA-binding, DNA-binding is inhibited by the PatS6 peptide. Binds the inverted repeat 5'-GTAGGCGAGGGGTCTAACCCCTCATTACC-3' found in the hetP promoter, required for expression of hetP. This Nostoc sp. (strain PCC 7120 / SAG 25.82 / UTEX 2576) protein is DNA-binding transcriptional activator HetR.